Here is a 504-residue protein sequence, read N- to C-terminus: Cytochrome P450 2D10 (504 aa).

Ser-382 carries O-linked (GlcNAc) serine glycosylation. Cys-446 serves as a coordination point for heme.

Belongs to the cytochrome P450 family. The cofactor is heme.

Its subcellular location is the endoplasmic reticulum membrane. The protein resides in the microsome membrane. It carries out the reaction an organic molecule + reduced [NADPH--hemoprotein reductase] + O2 = an alcohol + oxidized [NADPH--hemoprotein reductase] + H2O + H(+). Its function is as follows. Cytochromes P450 are a group of heme-thiolate monooxygenases. In liver microsomes, this enzyme is involved in an NADPH-dependent electron transport pathway. It oxidizes a variety of structurally unrelated compounds, including steroids, fatty acids, and xenobiotics. This Rattus norvegicus (Rat) protein is Cytochrome P450 2D10 (Cyp2d10).